We begin with the raw amino-acid sequence, 208 residues long: Glutathione S-transferase F6 (208 aa).

In terms of domain architecture, GST N-terminal spans 2 to 83 (AGIKVFGHPA…YIAHEFSDKG (82 aa)). Residues 12–13 (ST), 41–42 (HK), 54–55 (KV), and 67–68 (ES) each bind glutathione. Residues 89 to 208 (TGKDMAIIAM…TSRPSAQKVL (120 aa)) enclose the GST C-terminal domain.

This sequence belongs to the GST superfamily. Phi family.

It localises to the cytoplasm. The protein localises to the cytosol. The catalysed reaction is RX + glutathione = an S-substituted glutathione + a halide anion + H(+). In terms of biological role, involved in camalexin biosynthesis by probably catalyzing the conjugation of GSH with indole-3-acetonitrile (IAN). May be involved in the conjugation of reduced glutathione to a wide number of exogenous and endogenous hydrophobic electrophiles and have a detoxification role against certain herbicides. The protein is Glutathione S-transferase F6 (GSTF6) of Arabidopsis thaliana (Mouse-ear cress).